The chain runs to 375 residues: Paralyzed arrest at two-fold protein 6 (375 aa).

The disordered stretch occupies residues methionine 1–glutamate 51. Residues proline 10–valine 20 show a composition bias toward basic and acidic residues. 2 Calponin-homology (CH) domains span residues alanine 99–arginine 206 and alanine 266–lysine 373.

The protein belongs to the parvin family. May interact (via calponin-homology (CH) 2 domain) with pat-4 (via kinase domain). May form a complex with unc-112 and pat-4. Component of an integrin containing attachment complex, composed of at least pat-2, pat-3, pat-4, pat-6, unc-52, unc-97 and unc-112. Expressed from 1.5 stage embryos, mostly within the muscle cells. In adult hermaphrodites, expressed in the attachments of other muscles, including the uterine, anal depressor, anal sphincter, and vulval muscles, as well as in the spermatheca and the distal tip cells. Expressed in mechanosensory receptor neurons ALML/R, PLML/R, AVM, and PVM. Localizes at body wall muscle attachments.

The protein localises to the cytoplasm. Its subcellular location is the cytoskeleton. It is found in the myofibril. The protein resides in the sarcomere. It localises to the m line. The protein localises to the perikaryon. Its subcellular location is the cell projection. It is found in the axon. In terms of biological role, involved in the regulation of cell adhesion and cytoskeleton organization. Component of an integrin containing attachment complex, which is required for muscle development and maintenance. During embryonic development, required to recruit cpna-1, unc-89 and myofilaments to newly forming integrin attachments composed of integrins pat-2/pat-3, pat-4 and unc-112. Also required to reposition the integrin-based attachments so that they form the highly ordered array of dense body and M-line attachments that are characteristic of mature muscle cells. During the formation of neuromuscular junctions at the larval stage, negatively regulates membrane protrusion from body wall muscles. The protein is Paralyzed arrest at two-fold protein 6 of Caenorhabditis elegans.